A 298-amino-acid chain; its full sequence is ER-bound oxygenase mpaB (298 aa).

At 1–24 (MDKGTSFFTTPSFSATTRAIFNTM) the chain is on the lumenal side. The chain crosses the membrane as a helical span at residues 25–45 (PQWFSFAVGLLIAYPLLINSL). At 46-298 (RYRRLKQLQK…RLRKAMLYVE (253 aa)) the chain is on the cytoplasmic side.

It belongs to the mpaB oxygenase family.

The protein resides in the endoplasmic reticulum membrane. The catalysed reaction is 4-farnesyl-3,5-dihydroxy-6-methylphthalide + AH2 + 2 O2 = (4E,8E)-10-(4,6-dihydroxy-7-methyl-3-oxo-1,3-dihydro-2-benzofuran-5-yl)-4,8-dimethyldeca-4,8-dienoate + acetone + A + H2O + H(+). It participates in secondary metabolite biosynthesis; terpenoid biosynthesis. Its function is as follows. ER-bound oxygenase; part of the gene cluster that mediates the biosynthesis of mycophenolic acid (MPA), the first isolated antibiotic natural product in the world obtained from a culture of Penicillium brevicompactum in 1893. MpaB catalyzes the oxidative cleavage the C19-C20 double bond in farnesyl-DHMP (FDHMP) to yield FDHMP-3C via a mycophenolic aldehyde intermediate. The first step of the pathway is the synthesis of 5-methylorsellinic acid (5MOA) by the cytosolic polyketide synthase mpaC. 5MOA is then converted to the phthalide compound 5,7-dihydroxy-4,6-dimethylphthalide (DHMP) by the endoplasmic reticulum-bound cytochrome P450 monooxygenase mpaDE. MpaDE first catalyzes hydroxylation of 5-MOA to 4,6-dihydroxy-2-(hydroxymethyl)-3-methylbenzoic acid (DHMB). MpaDE then acts as a lactone synthase that catalyzes the ring closure to convert DHMB into DHMP. The next step is the prenylation of DHMP by the Golgi apparatus-associated prenyltransferase mpaA to yield farnesyl-DHMP (FDHMP). The ER-bound oxygenase mpaB then mediates the oxidative cleavage the C19-C20 double bond in FDHMP to yield FDHMP-3C via a mycophenolic aldehyde intermediate. The O-methyltransferase mpaG catalyzes the methylation of FDHMP-3C to yield MFDHMP-3C. After the cytosolic methylation of FDHMP-3C, MFDHMP-3C enters into peroxisomes probably via free diffusion due to its low molecular weight. Upon a peroxisomal CoA ligation reaction, catalyzed by a beta-oxidation component enzyme acyl-CoA ligase ACL891, MFDHMP-3C-CoA would then be restricted to peroxisomes for the following beta-oxidation pathway steps. The peroxisomal beta-oxidation machinery than converts MFDHMP-3C-CoA into MPA_CoA, via a beta-oxidation chain-shortening process. Finally mpaH acts as a peroxisomal acyl-CoA hydrolase with high substrate specificity toward MPA-CoA to release the final product MPA. The protein is ER-bound oxygenase mpaB of Penicillium roqueforti (strain FM164).